Consider the following 176-residue polypeptide: NAD(P)H-quinone oxidoreductase subunit 6, chloroplastic (176 aa).

Transmembrane regions (helical) follow at residues isoleucine 10–threonine 30, threonine 33–leucine 53, valine 60–phenylalanine 80, phenylalanine 92–methionine 112, and phenylalanine 152–threonine 172.

Belongs to the complex I subunit 6 family. In terms of assembly, NDH is composed of at least 16 different subunits, 5 of which are encoded in the nucleus.

The protein resides in the plastid. It is found in the chloroplast thylakoid membrane. The enzyme catalyses a plastoquinone + NADH + (n+1) H(+)(in) = a plastoquinol + NAD(+) + n H(+)(out). It catalyses the reaction a plastoquinone + NADPH + (n+1) H(+)(in) = a plastoquinol + NADP(+) + n H(+)(out). Its function is as follows. NDH shuttles electrons from NAD(P)H:plastoquinone, via FMN and iron-sulfur (Fe-S) centers, to quinones in the photosynthetic chain and possibly in a chloroplast respiratory chain. The immediate electron acceptor for the enzyme in this species is believed to be plastoquinone. Couples the redox reaction to proton translocation, and thus conserves the redox energy in a proton gradient. The polypeptide is NAD(P)H-quinone oxidoreductase subunit 6, chloroplastic (ndhG) (Oryza nivara (Indian wild rice)).